The sequence spans 476 residues: Bifunctional protein HldE (476 aa).

The segment at 1-318 (MKVTLPEFER…ENAVRGRADT (318 aa)) is ribokinase. 195-198 (NLSE) is a binding site for ATP. The active site involves aspartate 264. The interval 344-476 (MTNGVFDILH…IIKKIQKDSQ (133 aa)) is cytidylyltransferase.

This sequence in the N-terminal section; belongs to the carbohydrate kinase PfkB family. The protein in the C-terminal section; belongs to the cytidylyltransferase family. In terms of assembly, homodimer.

It catalyses the reaction D-glycero-beta-D-manno-heptose 7-phosphate + ATP = D-glycero-beta-D-manno-heptose 1,7-bisphosphate + ADP + H(+). It carries out the reaction D-glycero-beta-D-manno-heptose 1-phosphate + ATP + H(+) = ADP-D-glycero-beta-D-manno-heptose + diphosphate. It functions in the pathway nucleotide-sugar biosynthesis; ADP-L-glycero-beta-D-manno-heptose biosynthesis; ADP-L-glycero-beta-D-manno-heptose from D-glycero-beta-D-manno-heptose 7-phosphate: step 1/4. It participates in nucleotide-sugar biosynthesis; ADP-L-glycero-beta-D-manno-heptose biosynthesis; ADP-L-glycero-beta-D-manno-heptose from D-glycero-beta-D-manno-heptose 7-phosphate: step 3/4. Functionally, catalyzes the phosphorylation of D-glycero-D-manno-heptose 7-phosphate at the C-1 position to selectively form D-glycero-beta-D-manno-heptose-1,7-bisphosphate. In terms of biological role, catalyzes the ADP transfer from ATP to D-glycero-beta-D-manno-heptose 1-phosphate, yielding ADP-D-glycero-beta-D-manno-heptose. This chain is Bifunctional protein HldE, found in Enterobacter sp. (strain 638).